Here is a 161-residue protein sequence, read N- to C-terminus: Allophycocyanin alpha chain (161 aa).

Asn-71 bears the N4-methylasparagine mark. Residue Cys-81 participates in (2R,3E)-phycocyanobilin binding.

This sequence belongs to the phycobiliprotein family. In terms of assembly, heterodimer of an alpha and a beta chain. Contains one covalently linked phycocyanobilin chromophore.

Its subcellular location is the plastid. The protein localises to the chloroplast thylakoid membrane. In terms of biological role, light-harvesting photosynthetic bile pigment-protein from the phycobiliprotein complex. Allophycocyanin has a maximum absorption at approximately 650 nanometers. This Pyropia haitanensis (Red seaweed) protein is Allophycocyanin alpha chain (apcA).